The primary structure comprises 105 residues: Small ribosomal subunit protein uS10 (105 aa).

Belongs to the universal ribosomal protein uS10 family. Part of the 30S ribosomal subunit.

Functionally, involved in the binding of tRNA to the ribosomes. This is Small ribosomal subunit protein uS10 from Lachnoclostridium phytofermentans (strain ATCC 700394 / DSM 18823 / ISDg) (Clostridium phytofermentans).